The following is a 223-amino-acid chain: Voltage-dependent calcium channel gamma-1 subunit (223 aa).

Residues 1–10 are Cytoplasmic-facing; sequence MSQTKTAKVR. A helical membrane pass occupies residues 11 to 29; that stretch reads VTLFFILVGGVLAMVAVVT. At 30–109 the chain is on the extracellular side; the sequence is DHWAVLSPHL…TQKEYSISAA (80 aa). N-linked (GlcNAc...) asparagine glycans are attached at residues N43 and N80. A disulfide bridge connects residues C57 and C81. Residues 110–130 traverse the membrane as a helical segment; the sequence is AIAIFSLGFIIVGSICAFLSF. The Cytoplasmic portion of the chain corresponds to 131–135; the sequence is GNKRD. Residues 136–156 traverse the membrane as a helical segment; the sequence is YLLRPASMFYAFAGLCLIVSV. Over 157–180 the chain is Extracellular; it reads EVMRQSVKRMIDSEDTVWIEHYYS. The chain crosses the membrane as a helical span at residues 181 to 205; that stretch reads WSFACACAAFILLFLGGLFLLLFSL. The Cytoplasmic portion of the chain corresponds to 206-223; it reads PRMPQNPWESCMDAEPEH.

This sequence belongs to the PMP-22/EMP/MP20 family. CACNG subfamily. As to quaternary structure, component of a calcium channel complex consisting of a pore-forming alpha subunit (CACNA1S) and the ancillary subunits CACNB1 or CACNB2, CACNG1 and CACNA2D1. The channel complex contains alpha, beta, gamma and delta subunits in a 1:1:1:1 ratio, i.e. it contains either CACNB1 or CACNB2. N-glycosylated. In terms of tissue distribution, detected in skeletal muscle (at protein level).

The protein localises to the cell membrane. The protein resides in the sarcolemma. Functionally, regulatory subunit of the voltage-gated calcium channel that gives rise to L-type calcium currents in skeletal muscle. Regulates channel inactivation kinetics. This Mus musculus (Mouse) protein is Voltage-dependent calcium channel gamma-1 subunit (Cacng1).